The primary structure comprises 106 residues: MNRIYACPVADVPEGEALRIDTSPVIALFNVGGEFYAINDRCSHGNASMSEGYLEDDATVECPLHAASFCLKTGKALCLPATDPLTTYPVHVEGSDIFIDLPEAQP.

Residues 4-99 enclose the Rieske domain; the sequence is IYACPVADVP…VHVEGSDIFI (96 aa). 4 residues coordinate [2Fe-2S] cluster: Cys-42, His-44, Cys-62, and His-65.

Belongs to the bacterial ring-hydroxylating dioxygenase ferredoxin component family. As to quaternary structure, this dioxygenase system consists of four proteins: the two subunits of the hydroxylase component (HcaE and HcaF), a ferredoxin (HcaC) and a ferredoxin reductase (HcaD). The cofactor is [2Fe-2S] cluster.

Its pathway is aromatic compound metabolism; 3-phenylpropanoate degradation. Functionally, part of the multicomponent 3-phenylpropionate dioxygenase, that converts 3-phenylpropionic acid (PP) and cinnamic acid (CI) into 3-phenylpropionate-dihydrodiol (PP-dihydrodiol) and cinnamic acid-dihydrodiol (CI-dihydrodiol), respectively. This protein seems to be a 2Fe-2S ferredoxin. In Shigella boydii serotype 4 (strain Sb227), this protein is 3-phenylpropionate/cinnamic acid dioxygenase ferredoxin subunit.